A 468-amino-acid chain; its full sequence is Nuclear distribution protein PAC1-2 (468 aa).

The 33-residue stretch at 13–45 (QAEELHKSIIAYLTSLNLATTANTLRAELNLPE) folds into the LisH domain. Residues 66–92 (SVIRLQKKVLDLQAENAHLKNEIENAG) are a coiled coil. 8 WD repeats span residues 118–159 (GHRL…RTLK), 161–201 (HTKA…KNIR), 205–251 (GHDH…CVKT), 254–293 (GHNDWPRAVAPSADGRWLLSTGSDKAARLWDIGGTEPECR), 298–358 (GHEN…IKVL), 360–399 (GHDNWVRGLAFHPAGKFLISVADDRTMRCWDLSQDGKCVQ), 404–429 (MFDGFVSCVRWAPGITKDGLAGGDAG), and 430–468 (DGTPKKKTGAEANGGVQMRCVVATGSVDGTEGKVRIFAN).

Belongs to the WD repeat LIS1/nudF family. In terms of assembly, self-associates. Interacts with NDL1 and dynein.

Its subcellular location is the cytoplasm. It localises to the cytoskeleton. The protein localises to the spindle pole. Its function is as follows. Positively regulates the activity of the minus-end directed microtubule motor protein dynein. May enhance dynein-mediated microtubule sliding by targeting dynein to the microtubule plus end. Required for nuclear migration during vegetative growth as well as development. Required for retrograde early endosome (EE) transport from the hyphal tip. Required for localization of dynein to the mitotic spindle poles. Recruits additional proteins to the dynein complex at SPBs. This is Nuclear distribution protein PAC1-2 from Podospora anserina (strain S / ATCC MYA-4624 / DSM 980 / FGSC 10383) (Pleurage anserina).